A 338-amino-acid chain; its full sequence is Increasing suppression factor 1 (338 aa).

The span at 50 to 70 (QNSSKSNNSHHSSSTNAGNTS) shows a compositional bias: low complexity. The disordered stretch occupies residues 50-75 (QNSSKSNNSHHSSSTNAGNTSRHIGN). Phosphoserine is present on S119. Positions 267-306 (SLLSNGSSSSPLQTRNNSYSNSLVKSPSNSSLNTSVASSN) are enriched in low complexity. Positions 267–322 (SLLSNGSSSSPLQTRNNSYSNSLVKSPSNSSLNTSVASSNEESSPHTSNCLEERNP) are disordered. The segment covering 307–316 (EESSPHTSNC) has biased composition (polar residues).

Belongs to the ISF1/MBR1 family.

Functionally, could influence the NAM7/UPF1 function, possibly at the level of mRNA turnover. Participates in mitochondrial biogenesis. The protein is Increasing suppression factor 1 (ISF1) of Saccharomyces cerevisiae (strain ATCC 204508 / S288c) (Baker's yeast).